Here is a 75-residue protein sequence, read N- to C-terminus: Protein Tlp homolog (75 aa).

Positions 53–75 (REALDGMREEIKDEARDKKNGYM) are disordered.

This sequence belongs to the Tlp family.

This is Protein Tlp homolog from Clostridium botulinum (strain Langeland / NCTC 10281 / Type F).